The sequence spans 55 residues: Large ribosomal subunit protein bL33 (55 aa).

Belongs to the bacterial ribosomal protein bL33 family.

The chain is Large ribosomal subunit protein bL33 from Bartonella bacilliformis (strain ATCC 35685 / KC583 / Herrer 020/F12,63).